We begin with the raw amino-acid sequence, 164 residues long: MADENLQPVFQIQRVYLKDLSLEQPNSPAIFLEQDAPVIEVAVDVGAEQLAEGLFESTVTITVTAKINDKVAFLVEAKQAGIFEARNIPDEQLDPLIGIGCPSTIYPYLRANIADAITRAGFPPVHLSEINFEVFYQQRLEALAQQHASNGSGIVMPDGSAAQH.

This sequence belongs to the SecB family. As to quaternary structure, homotetramer, a dimer of dimers. One homotetramer interacts with 1 SecA dimer.

It localises to the cytoplasm. Functionally, one of the proteins required for the normal export of preproteins out of the cell cytoplasm. It is a molecular chaperone that binds to a subset of precursor proteins, maintaining them in a translocation-competent state. It also specifically binds to its receptor SecA. This Herminiimonas arsenicoxydans protein is Protein-export protein SecB.